A 300-amino-acid polypeptide reads, in one-letter code: Ribosomal RNA small subunit methyltransferase H (300 aa).

S-adenosyl-L-methionine contacts are provided by residues 46-48 (GGH), aspartate 65, phenylalanine 92, aspartate 107, and glutamine 114.

This sequence belongs to the methyltransferase superfamily. RsmH family.

The protein localises to the cytoplasm. It carries out the reaction cytidine(1402) in 16S rRNA + S-adenosyl-L-methionine = N(4)-methylcytidine(1402) in 16S rRNA + S-adenosyl-L-homocysteine + H(+). Specifically methylates the N4 position of cytidine in position 1402 (C1402) of 16S rRNA. The chain is Ribosomal RNA small subunit methyltransferase H from Prochlorococcus marinus (strain AS9601).